Consider the following 617-residue polypeptide: Proline--tRNA ligase (617 aa).

Belongs to the class-II aminoacyl-tRNA synthetase family. ProS type 1 subfamily. As to quaternary structure, homodimer.

Its subcellular location is the cytoplasm. It catalyses the reaction tRNA(Pro) + L-proline + ATP = L-prolyl-tRNA(Pro) + AMP + diphosphate. Its function is as follows. Catalyzes the attachment of proline to tRNA(Pro) in a two-step reaction: proline is first activated by ATP to form Pro-AMP and then transferred to the acceptor end of tRNA(Pro). As ProRS can inadvertently accommodate and process non-cognate amino acids such as alanine and cysteine, to avoid such errors it has two additional distinct editing activities against alanine. One activity is designated as 'pretransfer' editing and involves the tRNA(Pro)-independent hydrolysis of activated Ala-AMP. The other activity is designated 'posttransfer' editing and involves deacylation of mischarged Ala-tRNA(Pro). The misacylated Cys-tRNA(Pro) is not edited by ProRS. This Streptococcus pneumoniae (strain ATCC BAA-255 / R6) protein is Proline--tRNA ligase.